A 345-amino-acid polypeptide reads, in one-letter code: Nicotinate-nucleotide--dimethylbenzimidazole phosphoribosyltransferase (345 aa).

The Proton acceptor role is filled by Glu-312.

This sequence belongs to the CobT family.

It carries out the reaction 5,6-dimethylbenzimidazole + nicotinate beta-D-ribonucleotide = alpha-ribazole 5'-phosphate + nicotinate + H(+). It functions in the pathway nucleoside biosynthesis; alpha-ribazole biosynthesis; alpha-ribazole from 5,6-dimethylbenzimidazole: step 1/2. Functionally, catalyzes the synthesis of alpha-ribazole-5'-phosphate from nicotinate mononucleotide (NAMN) and 5,6-dimethylbenzimidazole (DMB). The sequence is that of Nicotinate-nucleotide--dimethylbenzimidazole phosphoribosyltransferase from Phocaeicola vulgatus (strain ATCC 8482 / DSM 1447 / JCM 5826 / CCUG 4940 / NBRC 14291 / NCTC 11154) (Bacteroides vulgatus).